The following is a 792-amino-acid chain: Ribonucleoside-diphosphate reductase large subunit (792 aa).

One can recognise an ATP-cone domain in the interval 1–92; that stretch reads MHVIKRDGRQ…VSNLHKETKK (92 aa). Residues 5–6, 11–17, Thr53, and Asp57 contribute to the ATP site; these read KR and ERVMFDK. Lys17 bears the N6-acetyllysine mark. 2 residues coordinate GDP: Ser202 and Ser217. Cysteines 218 and 444 form a disulfide. Residues 226–228, Lys243, Arg256, and 263–264 each bind dTTP; these read DSI and AG. At Lys376 the chain carries N6-acetyllysine. Residue Asn427 participates in GDP binding. The Proton acceptor role is filled by Asn427. The active-site Cysteine radical intermediate is Cys429. GDP is bound by residues Glu431 and 604–607; that span reads TAST. Glu431 acts as the Proton acceptor in catalysis. Thr751 carries the phosphothreonine modification.

Belongs to the ribonucleoside diphosphate reductase large chain family. In terms of assembly, heterodimer of a large and a small subunit. Interacts with RRM2B. Interacts with AHCYL1 which inhibits its activity.

It is found in the cytoplasm. It catalyses the reaction a 2'-deoxyribonucleoside 5'-diphosphate + [thioredoxin]-disulfide + H2O = a ribonucleoside 5'-diphosphate + [thioredoxin]-dithiol. Its activity is regulated as follows. Under complex allosteric control mediated by deoxynucleoside triphosphates and ATP binding to separate specificity and activation sites on the M1 subunit. The type of nucleotide bound at the specificity site determines substrate preference. It seems probable that ATP makes the enzyme reduce CDP and UDP, dGTP favors ADP reduction and dTTP favors GDP reduction. Stimulated by ATP and inhibited by dATP binding to the activity site, the dATP inhibition is mediated by AHCYL1 which stabilizes dATP in the site. Its function is as follows. Provides the precursors necessary for DNA synthesis. Catalyzes the biosynthesis of deoxyribonucleotides from the corresponding ribonucleotides. This Mus musculus (Mouse) protein is Ribonucleoside-diphosphate reductase large subunit (Rrm1).